Reading from the N-terminus, the 379-residue chain is Cell division protein FtsZ (379 aa).

GTP-binding positions include 18–22 (GGGVN), 105–107 (GTG), Glu-136, Arg-140, and Asp-184.

It belongs to the FtsZ family. As to quaternary structure, homodimer. Polymerizes to form a dynamic ring structure in a strictly GTP-dependent manner. Interacts directly with several other division proteins.

The protein resides in the cytoplasm. Functionally, essential cell division protein that forms a contractile ring structure (Z ring) at the future cell division site. The regulation of the ring assembly controls the timing and the location of cell division. One of the functions of the FtsZ ring is to recruit other cell division proteins to the septum to produce a new cell wall between the dividing cells. Binds GTP and shows GTPase activity. This chain is Cell division protein FtsZ, found in Mycobacterium bovis (strain ATCC BAA-935 / AF2122/97).